Consider the following 404-residue polypeptide: Succinyl-diaminopimelate desuccinylase (404 aa).

H80 serves as a coordination point for Zn(2+). The active site involves D82. Residue D113 coordinates Zn(2+). Residue E147 is the Proton acceptor of the active site. 3 residues coordinate Zn(2+): E148, E176, and H373.

This sequence belongs to the peptidase M20A family. DapE subfamily. As to quaternary structure, homodimer. It depends on Zn(2+) as a cofactor. The cofactor is Co(2+).

The enzyme catalyses N-succinyl-(2S,6S)-2,6-diaminopimelate + H2O = (2S,6S)-2,6-diaminopimelate + succinate. The protein operates within amino-acid biosynthesis; L-lysine biosynthesis via DAP pathway; LL-2,6-diaminopimelate from (S)-tetrahydrodipicolinate (succinylase route): step 3/3. Its function is as follows. Catalyzes the hydrolysis of N-succinyl-L,L-diaminopimelic acid (SDAP), forming succinate and LL-2,6-diaminopimelate (DAP), an intermediate involved in the bacterial biosynthesis of lysine and meso-diaminopimelic acid, an essential component of bacterial cell walls. The chain is Succinyl-diaminopimelate desuccinylase from Allorhizobium ampelinum (strain ATCC BAA-846 / DSM 112012 / S4) (Agrobacterium vitis (strain S4)).